We begin with the raw amino-acid sequence, 270 residues long: Imidazole glycerol phosphate synthase subunit HisF (270 aa).

Active-site residues include Asp11 and Asp130.

The protein belongs to the HisA/HisF family. In terms of assembly, heterodimer of HisH and HisF.

Its subcellular location is the cytoplasm. It catalyses the reaction 5-[(5-phospho-1-deoxy-D-ribulos-1-ylimino)methylamino]-1-(5-phospho-beta-D-ribosyl)imidazole-4-carboxamide + L-glutamine = D-erythro-1-(imidazol-4-yl)glycerol 3-phosphate + 5-amino-1-(5-phospho-beta-D-ribosyl)imidazole-4-carboxamide + L-glutamate + H(+). It participates in amino-acid biosynthesis; L-histidine biosynthesis; L-histidine from 5-phospho-alpha-D-ribose 1-diphosphate: step 5/9. In terms of biological role, IGPS catalyzes the conversion of PRFAR and glutamine to IGP, AICAR and glutamate. The HisF subunit catalyzes the cyclization activity that produces IGP and AICAR from PRFAR using the ammonia provided by the HisH subunit. The sequence is that of Imidazole glycerol phosphate synthase subunit HisF from Chloroflexus aggregans (strain MD-66 / DSM 9485).